A 272-amino-acid polypeptide reads, in one-letter code: Glutamate racemase (272 aa).

Substrate contacts are provided by residues 12–13 (DS) and 44–45 (YG). C75 acts as the Proton donor/acceptor in catalysis. Position 76 to 77 (76 to 77 (NT)) interacts with substrate. Residue C185 is the Proton donor/acceptor of the active site. Residue 186–187 (TH) coordinates substrate.

Belongs to the aspartate/glutamate racemases family.

It catalyses the reaction L-glutamate = D-glutamate. It functions in the pathway cell wall biogenesis; peptidoglycan biosynthesis. Functionally, provides the (R)-glutamate required for cell wall biosynthesis. The chain is Glutamate racemase from Mycobacterium leprae (strain TN).